We begin with the raw amino-acid sequence, 102 residues long: UPF0213 protein XAC3202 (102 aa).

The 76-residue stretch at 5 to 80 (KPWHLYLLLC…KRLPRARKLA (76 aa)) folds into the GIY-YIG domain.

The protein belongs to the UPF0213 family.

The chain is UPF0213 protein XAC3202 from Xanthomonas axonopodis pv. citri (strain 306).